The following is a 266-amino-acid chain: Diphthine synthase (266 aa).

S-adenosyl-L-methionine contacts are provided by residues L9, D84, V87, 112-113, L169, A210, and H235; that span reads SI.

The protein belongs to the diphthine synthase family. As to quaternary structure, homodimer.

It carries out the reaction 2-[(3S)-amino-3-carboxypropyl]-L-histidyl-[translation elongation factor 2] + 3 S-adenosyl-L-methionine = diphthine-[translation elongation factor 2] + 3 S-adenosyl-L-homocysteine + 3 H(+). It functions in the pathway protein modification; peptidyl-diphthamide biosynthesis. S-adenosyl-L-methionine-dependent methyltransferase that catalyzes the trimethylation of the amino group of the modified target histidine residue in translation elongation factor 2 (EF-2), to form an intermediate called diphthine. The three successive methylation reactions represent the second step of diphthamide biosynthesis. This is Diphthine synthase from Methanosarcina mazei (strain ATCC BAA-159 / DSM 3647 / Goe1 / Go1 / JCM 11833 / OCM 88) (Methanosarcina frisia).